Reading from the N-terminus, the 984-residue chain is Valine--tRNA ligase (984 aa).

The 'HIGH' region signature appears at 65-75 (PNVTGSLHMGH). The short motif at 579–583 (KMSKS) is the 'KMSKS' region element. K582 provides a ligand contact to ATP. A coiled-coil region spans residues 954–984 (VEVVDAEKAKLAELEGQLTAMTAQMEELKNL).

The protein belongs to the class-I aminoacyl-tRNA synthetase family. ValS type 1 subfamily. In terms of assembly, monomer.

It is found in the cytoplasm. The enzyme catalyses tRNA(Val) + L-valine + ATP = L-valyl-tRNA(Val) + AMP + diphosphate. Functionally, catalyzes the attachment of valine to tRNA(Val). As ValRS can inadvertently accommodate and process structurally similar amino acids such as threonine, to avoid such errors, it has a 'posttransfer' editing activity that hydrolyzes mischarged Thr-tRNA(Val) in a tRNA-dependent manner. This chain is Valine--tRNA ligase, found in Psychrobacter arcticus (strain DSM 17307 / VKM B-2377 / 273-4).